The following is a 299-amino-acid chain: tRNA pseudouridine synthase B (299 aa).

The active-site Nucleophile is the Asp-47.

This sequence belongs to the pseudouridine synthase TruB family. Type 1 subfamily.

The catalysed reaction is uridine(55) in tRNA = pseudouridine(55) in tRNA. Its function is as follows. Responsible for synthesis of pseudouridine from uracil-55 in the psi GC loop of transfer RNAs. The sequence is that of tRNA pseudouridine synthase B from Dechloromonas aromatica (strain RCB).